Here is a 178-residue protein sequence, read N- to C-terminus: Disulfide bond formation protein B (178 aa).

Topologically, residues 1 to 16 (MTIFSSLNQFSKGHVS) are cytoplasmic. A helical membrane pass occupies residues 17–33 (WLLLLLFIIFFEACALY). Topologically, residues 34-51 (FQHVMMLAPCVMCIYERV) are periplasmic. Cys43 and Cys46 are disulfide-bonded. Residues 52-67 (AMMGIGGAAIIGLIAP) form a helical membrane-spanning segment. Topologically, residues 68-74 (NNALFRW) are cytoplasmic. The chain crosses the membrane as a helical span at residues 75 to 92 (LGLIGWGLSSYKGLMLAM). Residues 93 to 147 (QHVDYQFNPSPFATCDLFVTFPSWAPLNQWVPWMFEAYGDCSKIVWQFFDLSMPQ) lie on the Periplasmic side of the membrane. Cys107 and Cys133 are disulfide-bonded. The helical transmembrane segment at 148-166 (WLVVIFAGNLVALALIVIA) threads the bilayer. Residues 167-178 (QFFPVKRKNPIR) are Cytoplasmic-facing.

The protein belongs to the DsbB family.

It is found in the cell inner membrane. Its function is as follows. Required for disulfide bond formation in some periplasmic proteins. Acts by oxidizing the DsbA protein. The chain is Disulfide bond formation protein B from Vibrio parahaemolyticus serotype O3:K6 (strain RIMD 2210633).